The primary structure comprises 355 residues: Chemerin-like receptor 2 (355 aa).

Over 1–41 (MEDLEETLFEEFENYSYALDYYSLESDLEEKVQLGVVHWVS) the chain is Extracellular. An N-linked (GlcNAc...) asparagine glycan is attached at N14. A helical membrane pass occupies residues 42 to 62 (LVLYCLSFVLGIPGNAIVIWF). The Cytoplasmic segment spans residues 63–73 (TGFKWKKTVST). A helical membrane pass occupies residues 74–94 (LWFLNLAIADFIFLLFLPLYI). Residues 95 to 112 (SYVVMNFHWPFGIWLCKA) are Extracellular-facing. C110 and C187 form a disulfide bridge. Residues 113 to 133 (NSFTAQLNMFASVFFLTVISL) traverse the membrane as a helical segment. Residues 134–154 (DHYIHLIHPVLSHRHRTLKNS) are Cytoplasmic-facing. The chain crosses the membrane as a helical span at residues 155–175 (LIVIIFIWLLASLIGGPALYF). Over 176–210 (RDTVEFNNHTLCYNNFQKHDPDLTVIRHHVLTWVK) the chain is Extracellular. Residues 211–231 (FIVGYLFPLLTMSICYLCLIF) form a helical membrane-spanning segment. Residues 232–247 (KVKKRSILISSRHFWT) lie on the Cytoplasmic side of the membrane. The helical transmembrane segment at 248 to 268 (ILAVVVAFVVCWTPYHLFSIW) threads the bilayer. The Extracellular segment spans residues 269–286 (ELTIHHNSYSHHVMQAGI). Residues 287–307 (PLSTGLAFLNSCLNPILYVLI) form a helical membrane-spanning segment. Residues 308–355 (SKKFQARFRSSVAEILKYTLWEVSCSGTVSEQLRNSETKNLCLLETAQ) are Cytoplasmic-facing.

This sequence belongs to the chemokine-like receptor (CMKLR) family.

The protein resides in the cell membrane. Functionally, receptor for chemoattractant adipokine chemerin/RARRES2 suggesting a role for this receptor in the regulation of inflammation and energy homesotasis. Signals mainly via beta-arrestin pathway. Binding of RARRES2 activates weakly G proteins, calcium mobilization and MAPK1/MAPK3 (ERK1/2) phosphorylation too. Acts also as a receptor for TAFA1, mediates its effects on neuronal stem-cell proliferation and differentiation via the activation of ROCK/ERK and ROCK/STAT3 signaling pathway. This is Chemerin-like receptor 2 (CMKLR2) from Macaca mulatta (Rhesus macaque).